The chain runs to 235 residues: Small ribosomal subunit protein uS3 (235 aa).

The KH type-2 domain occupies 39 to 107 (VRKFLNKELM…PAQINIAEVK (69 aa)).

Belongs to the universal ribosomal protein uS3 family. As to quaternary structure, part of the 30S ribosomal subunit. Forms a tight complex with proteins S10 and S14.

Functionally, binds the lower part of the 30S subunit head. Binds mRNA in the 70S ribosome, positioning it for translation. The polypeptide is Small ribosomal subunit protein uS3 (Actinobacillus succinogenes (strain ATCC 55618 / DSM 22257 / CCUG 43843 / 130Z)).